The sequence spans 614 residues: DNA ligase (614 aa).

NAD(+) is bound by residues 29 to 33 (DQDYD) and 73 to 74 (SI). Lys-111 serves as the catalytic N6-AMP-lysine intermediate. NAD(+) is bound by residues Arg-127, Glu-158, and Lys-270. Residues Cys-358, Cys-361, Cys-374, and Cys-380 each coordinate Zn(2+). Residues 538–614 (TLTHELFDKK…MTETDYLSKI (77 aa)) form the BRCT domain.

This sequence belongs to the NAD-dependent DNA ligase family. LigA subfamily. The cofactor is Mg(2+). It depends on Mn(2+) as a cofactor.

The catalysed reaction is NAD(+) + (deoxyribonucleotide)n-3'-hydroxyl + 5'-phospho-(deoxyribonucleotide)m = (deoxyribonucleotide)n+m + AMP + beta-nicotinamide D-nucleotide.. In terms of biological role, DNA ligase that catalyzes the formation of phosphodiester linkages between 5'-phosphoryl and 3'-hydroxyl groups in double-stranded DNA using NAD as a coenzyme and as the energy source for the reaction. It is essential for DNA replication and repair of damaged DNA. The chain is DNA ligase from Ruthia magnifica subsp. Calyptogena magnifica.